A 419-amino-acid polypeptide reads, in one-letter code: Pregnancy-specific beta-1-glycoprotein 1 (419 aa).

The first 34 residues, 1–34 (MGTLSAPPCTQRIKWKGLLLTASLLNFWNLPTTA), serve as a signal peptide directing secretion. Residues 35 to 144 (QVTIEAEPTK…TGRFTFTLHL (110 aa)) form the Ig-like V-type domain. N-linked (GlcNAc...) asparagine glycosylation is found at N61, N104, N111, N199, N259, N268, and N303. Ig-like C2-type domains are found at residues 149-234 (PSIS…VTLN), 240-327 (PKPY…VTLN), and 335-410 (PRIY…KSMT). C169 and C217 are oxidised to a cystine. 2 disulfides stabilise this stretch: C262-C310 and C354-C394.

It belongs to the immunoglobulin superfamily. CEA family.

The protein localises to the secreted. The sequence is that of Pregnancy-specific beta-1-glycoprotein 1 (PSG1) from Homo sapiens (Human).